The primary structure comprises 90 residues: Probable Fe(2+)-trafficking protein (90 aa).

Belongs to the Fe(2+)-trafficking protein family.

In terms of biological role, could be a mediator in iron transactions between iron acquisition and iron-requiring processes, such as synthesis and/or repair of Fe-S clusters in biosynthetic enzymes. The protein is Probable Fe(2+)-trafficking protein of Pseudoalteromonas translucida (strain TAC 125).